The chain runs to 1227 residues: RNA-binding protein 20 (1227 aa).

Disordered stretches follow at residues 1-58 (MVLA…QAGL) and 289-374 (GSHV…SKQG). Residues 27–42 (PGARASPAPSGPRGMQ) are compositionally biased toward low complexity. Residues 43–56 (QPPPPPQPPPPPQA) are compositionally biased toward pro residues. Residues 313-331 (QGTNSQWESPHGFSGQSKP) show a composition bias toward polar residues. The U1-type zinc finger occupies 409–443 (HLPHICSICDKKVFDLKDWELHVKGKLHAQKCLVF). Ser-498 carries the post-translational modification Phosphoserine. Positions 518-593 (RVVHICNLPE…EKLLIRMSKR (76 aa)) constitute an RRM domain. A compositionally biased stretch (basic and acidic residues) spans 624-634 (EADRYGPERPR). Disordered regions lie at residues 624–906 (EADR…TNME) and 977–1089 (SLKS…ASPP). Positions 628-655 (YGPERPRSRSPVSRSLSPRSHTPSFTSC) are RS. Phosphoserine occurs at positions 635, 637, 640, 642, 660, and 679. The segment covering 636–660 (RSPVSRSLSPRSHTPSFTSCSSSHS) has biased composition (low complexity). 2 stretches are compositionally biased toward basic and acidic residues: residues 674–709 (DSWEHSPYARREEERDPAPWRDNGDDKRDRMDPWAH) and 716–738 (RQLDKAELDERPEGGRPHREKYP). A compositionally biased stretch (polar residues) spans 741–752 (GSPNLPHSVSSY). A Phosphoserine modification is found at Ser-742. 3 stretches are compositionally biased toward basic and acidic residues: residues 753–772 (KSREDGYYRKEPKAKSDKYL), 784–807 (RKDEARLRESRHPHPDDSGKEDGL), and 816–856 (EGAK…KEEQ). Position 801 is a phosphoserine (Ser-801). Residues Ser-865, Ser-876, Ser-891, Ser-893, Ser-977, Ser-980, and Ser-1013 each carry the phosphoserine modification. The segment covering 868–888 (RQEKEAEFSDPENTRTKKEQD) has biased composition (basic and acidic residues). Residues 1024-1036 (CYEKEAKGVESSD) show a composition bias toward basic and acidic residues. Residues Ser-1048, Ser-1060, Ser-1080, Ser-1115, and Ser-1120 each carry the phosphoserine modification. The Matrin-type zinc finger occupies 1161–1192 (FYCKLCGLFYTSEETAKMSHCRSAVHYRNLQK). Positions 1201-1215 (GLKETEGADSPRPED) are enriched in basic and acidic residues. The interval 1201 to 1227 (GLKETEGADSPRPEDSGIVPRFERKKL) is disordered. Ser-1210 carries the phosphoserine modification.

As to quaternary structure, associates with components of the U1 and U2 U1 small nuclear ribonucleoprotein complexes. In terms of processing, phosphorylation regulates the subcellular localization. Phosphorylation of Ser-635 and Ser-637 in the RS (arginine/serine-rich) region promotes nuclear localization of the protein. In contrast, phosphorylation of the C-terminal disordered region promotes localization to cytoplasmic ribonucleoprotein granules. Mainly expressed in the heart. Also expressed in skeletal muscle tissues, ovary, small intestine and colon.

The protein localises to the nucleus. It localises to the cytoplasm. Its subcellular location is the cytoplasmic ribonucleoprotein granule. In terms of biological role, RNA-binding protein that acts as a regulator of mRNA splicing of a subset of genes encoding key structural proteins involved in cardiac development, such as TTN (Titin), CACNA1C, CAMK2D or PDLIM5/ENH. Acts as a repressor of mRNA splicing: specifically binds the 5'UCUU-3' motif that is predominantly found within intronic sequences of pre-mRNAs, leading to the exclusion of specific exons in target transcripts. RBM20-mediated exon skipping is hormone-dependent and is essential for TTN isoform transition in both cardiac and skeletal muscles. RBM20-mediated exon skipping of TTN provides substrates for the formation of circular RNA (circRNAs) from the TTN transcripts. Together with RBM24, promotes the expression of short isoforms of PDLIM5/ENH in cardiomyocytes. The polypeptide is RNA-binding protein 20 (Homo sapiens (Human)).